The following is a 538-amino-acid chain: Methyl-accepting chemotaxis protein NahY (538 aa).

Residues 1–9 (MQQFTIRTR) lie on the Cytoplasmic side of the membrane. A helical membrane pass occupies residues 10 to 30 (LLMLVGAMFIGFITIELMGFS). Topologically, residues 31 to 187 (ALQRGVASLN…AVVLYDSSRT (157 aa)) are periplasmic. Residues 188-208 (MLALLLLGILICGGVFATRLI) traverse the membrane as a helical segment. In terms of domain architecture, HAMP spans 209 to 261 (RSIIHPLTTLKDAAARVALGDLSQSIQVSGRNEVTDVQQSVQAMQANLRNTLQ). At 209–538 (RSIIHPLTTL…LNNLVNRFSM (330 aa)) the chain is on the cytoplasmic side. The region spanning 266 to 502 (SAAQLAAAAE…EVDRNLVAIS (237 aa)) is the Methyl-accepting transducer domain.

It belongs to the methyl-accepting chemotaxis (MCP) protein family.

It localises to the cell inner membrane. Its function is as follows. Chemotactic-signal transducers respond to changes in the concentration of attractants and repellents in the environment, transduce a signal from the outside to the inside of the cell, and facilitate sensory adaptation through the variation of the level of methylation. Chemoreceptor for naphthalene or a related compound. May facilitate biodegradation. The chain is Methyl-accepting chemotaxis protein NahY (nahY) from Pseudomonas putida (Arthrobacter siderocapsulatus).